We begin with the raw amino-acid sequence, 936 residues long: Protocadherin gamma-A10 (936 aa).

An N-terminal signal peptide occupies residues 1 to 32 (MAAQRNRSKESKDCSGLVLLCLFFGIPWEAGA). 6 consecutive Cadherin domains span residues 33–137 (RQIS…APTF), 138–246 (QAEN…APVF), 247–351 (TLPE…SPEL), 352–456 (TITS…PPTF), 457–566 (SQVS…APEI), and 574–687 (DGST…SPAN). Topologically, residues 33-696 (RQISYSIPEE…NSETSDLTLY (664 aa)) are extracellular. Asn-51 is a glycosylation site (N-linked (GlcNAc...) asparagine). N-linked (GlcNAc...) asparagine glycosylation is found at Asn-423 and Asn-549. Residues 697–717 (LVVAVAAVSCVFLAFVIVLLA) traverse the membrane as a helical segment. Topologically, residues 718–936 (LRLRRWHKSR…KKKSGKKEKK (219 aa)) are cytoplasmic. Disordered regions lie at residues 801–845 (SKFP…WPNN) and 906–936 (ATLTNAAGKRDGKAPAGGNGNKKKSGKKEKK). Residues 820–845 (WRFSQAQRPGTSGSQNGDDTGTWPNN) are compositionally biased toward polar residues. Positions 926–936 (NKKKSGKKEKK) are enriched in basic residues.

It is found in the cell membrane. Potential calcium-dependent cell-adhesion protein. May be involved in the establishment and maintenance of specific neuronal connections in the brain. The protein is Protocadherin gamma-A10 (PCDHGA10) of Pan troglodytes (Chimpanzee).